Here is a 149-residue protein sequence, read N- to C-terminus: Large ribosomal subunit protein bL9 (149 aa).

Belongs to the bacterial ribosomal protein bL9 family.

Its function is as follows. Binds to the 23S rRNA. The polypeptide is Large ribosomal subunit protein bL9 (Acidothermus cellulolyticus (strain ATCC 43068 / DSM 8971 / 11B)).